The primary structure comprises 327 residues: Polyprenyl transferase andD (327 aa).

8 helical membrane passes run 49-69 (LGYI…ASIA), 81-101 (ITLL…WDDI), 140-160 (FAFV…MLFF), 174-194 (PQLI…GLNL), 201-221 (IPMA…DIIY), 244-264 (CLDA…VIAG), 271-291 (APFF…LAMA), and 307-327 (CCTS…VWRS).

This sequence belongs to the UbiA prenyltransferase family. Mg(2+) is required as a cofactor.

The protein resides in the membrane. The protein operates within secondary metabolite biosynthesis; terpenoid biosynthesis. In terms of biological role, polyprenyl transferase; part of the gene cluster that mediates the biosynthesis of anditomin, a fungal meroterpenoid. The first step of the pathway is the synthesis of 3,5-dimethylorsellinic acid (DMOA) by the polyketide synthase andM. DMOA is then converted to the phthalide compound 5,7-dihydroxy-4,6-dimethylphthalide (DHDMP) by the cytochrome P450 monooxygenase andK, which is further prenylated by the prenyltransferase andD to yield farnesyl-DHDMP. Further epoxidation by the FAD-dependent monooxygenase andE leads to epoxyfarnesyl-DHDMP. The next step involves the terpene cyclase andB that converts epoxyfarnesyl-DHDMP into preandiloid A through opening of the epoxide ring followed by the cyclization of the farnesyl moiety. Preandiloid A is in turn oxidized at the C-3 hydroxyl group to yield preandiloid B by the dehydrogenase andC. The dioxygenase andA is solely responsible for the dehydrogenation of preandiloid B leading to the enone preandiloid C, as well as for the intriguing structural rearrangement to generate the bicyclo[2.2.2]octane core, transforming preandiloid C into andiconin. FAD-binding monooxygenase andJ then produces andilesin D which is reduced by dehydrogenase andI to yield andilesin A. Action of acetyltransferase andG followed by a spontaneous acetate elimination leads then to andilesin B, which is in turn substrate of the short chain dehydrogenase andH to yield andilesin C. Finally, the dioxygenase andF catalyzes the transformation of andilesin C to anditomin. The polypeptide is Polyprenyl transferase andD (Emericella variicolor (Aspergillus stellatus)).